A 142-amino-acid polypeptide reads, in one-letter code: MVLSAADKTNVKAAWSKVGGHAGEFGAEALERMFLGFPTTKTYFPHFDLSHGSAQVKAHGKKVGDALTLAVGHLDDLPGALSNLSDLHAHKLRVDPVNFKLLSHCLLSTLAVHLPNDFTPAVHASLDKFLSSVSTVLTSKYR.

Residues Val-2–Arg-142 enclose the Globin domain. A Phosphoserine modification is found at Ser-4. An N6-succinyllysine modification is found at Lys-8. Thr-9 carries the phosphothreonine modification. N6-succinyllysine is present on Lys-12. Lys-17 bears the N6-acetyllysine; alternate mark. Residue Lys-17 is modified to N6-succinyllysine; alternate. Lys-41 bears the N6-succinyllysine mark. Phosphoserine is present on Ser-50. Residue His-59 participates in O2 binding. His-88 provides a ligand contact to heme b. Ser-103 is modified (phosphoserine). Phosphothreonine is present on Thr-109. Phosphoserine occurs at positions 125 and 132. A phosphothreonine mark is found at Thr-135 and Thr-138. Ser-139 is modified (phosphoserine).

The protein belongs to the globin family. As to quaternary structure, heterotetramer of two alpha chains and two beta chains. As to expression, red blood cells.

Functionally, involved in oxygen transport from the lung to the various peripheral tissues. In terms of biological role, hemopressin acts as an antagonist peptide of the cannabinoid receptor CNR1. Hemopressin-binding efficiently blocks cannabinoid receptor CNR1 and subsequent signaling. The chain is Hemoglobin subunit alpha (HBA) from Equus przewalskii (Przewalski's horse).